We begin with the raw amino-acid sequence, 98 residues long: Large ribosomal subunit protein uL23 (98 aa).

Belongs to the universal ribosomal protein uL23 family. As to quaternary structure, part of the 50S ribosomal subunit. Contacts protein L29, and trigger factor when it is bound to the ribosome.

Its function is as follows. One of the early assembly proteins it binds 23S rRNA. One of the proteins that surrounds the polypeptide exit tunnel on the outside of the ribosome. Forms the main docking site for trigger factor binding to the ribosome. In Legionella pneumophila (strain Paris), this protein is Large ribosomal subunit protein uL23.